The sequence spans 71 residues: Beta-defensin 7 (71 aa).

The first 22 residues, 1–22 (MRIHYVLFAFLLVLLSPFAAFS), serve as a signal peptide directing secretion. Position 23 is a pyrrolidone carboxylic acid (Q23). Residues 23–25 (QDI) constitute a propeptide that is removed on maturation. 3 disulfide bridges follow: C31-C58, C38-C52, and C42-C59.

It belongs to the beta-defensin family. LAP/TAP subfamily.

Its subcellular location is the secreted. In terms of biological role, has bactericidal activity. In Mus musculus (Mouse), this protein is Beta-defensin 7 (Defb7).